Reading from the N-terminus, the 218-residue chain is Ribonuclease T (218 aa).

The region spanning 24 to 198 (VIIDVETAGF…YDAERTAELF (175 aa)) is the Exonuclease domain. Residues Asp27, Glu29, His185, and Asp190 each contribute to the Mg(2+) site. His185 (proton donor/acceptor) is an active-site residue.

Belongs to the RNase T family. As to quaternary structure, homodimer. It depends on Mg(2+) as a cofactor.

Trims short 3' overhangs of a variety of RNA species, leaving a one or two nucleotide 3' overhang. Responsible for the end-turnover of tRNA: specifically removes the terminal AMP residue from uncharged tRNA (tRNA-C-C-A). Also appears to be involved in tRNA biosynthesis. The protein is Ribonuclease T of Histophilus somni (strain 129Pt) (Haemophilus somnus).